The primary structure comprises 511 residues: RNA-splicing ligase RtcB homolog (511 aa).

Mn(2+) contacts are provided by Asp125, Cys128, His233, His265, and His359. 232 to 236 serves as a coordination point for GMP; the sequence is NHYAE. GMP is bound by residues 359 to 360, 408 to 411, Ser415, 434 to 437, and Lys510; these read HN, GGTM, and HGAG. Residue His434 is the GMP-histidine intermediate of the active site.

The protein belongs to the RtcB family. Catalytic component of the tRNA-splicing ligase complex. Mn(2+) is required as a cofactor.

It catalyses the reaction a 3'-end 3'-phospho-ribonucleotide-RNA + a 5'-end dephospho-ribonucleoside-RNA + GTP = a ribonucleotidyl-ribonucleotide-RNA + GMP + diphosphate. It carries out the reaction a 3'-end 2',3'-cyclophospho-ribonucleotide-RNA + a 5'-end dephospho-ribonucleoside-RNA + GTP + H2O = a ribonucleotidyl-ribonucleotide-RNA + GMP + diphosphate + H(+). In terms of biological role, catalytic subunit of the tRNA-splicing ligase complex that acts by directly joining spliced tRNA halves to mature-sized tRNAs by incorporating the precursor-derived splice junction phosphate into the mature tRNA as a canonical 3',5'-phosphodiester. May act as an RNA ligase with broad substrate specificity, and may function toward other RNAs. The chain is RNA-splicing ligase RtcB homolog from Plasmodium knowlesi (strain H).